The following is a 170-amino-acid chain: Urease accessory protein UreE (170 aa).

This sequence belongs to the UreE family.

The protein localises to the cytoplasm. Involved in urease metallocenter assembly. Binds nickel. Probably functions as a nickel donor during metallocenter assembly. This is Urease accessory protein UreE from Helicobacter pylori (strain HPAG1).